The sequence spans 192 residues: A-type ATP synthase subunit E (192 aa).

Belongs to the V-ATPase E subunit family. As to quaternary structure, has multiple subunits with at least A(3), B(3), C, D, E, F, H, I and proteolipid K(x).

The protein localises to the cell membrane. Component of the A-type ATP synthase that produces ATP from ADP in the presence of a proton gradient across the membrane. The chain is A-type ATP synthase subunit E from Metallosphaera sedula (strain ATCC 51363 / DSM 5348 / JCM 9185 / NBRC 15509 / TH2).